Consider the following 498-residue polypeptide: Protein WHAT'S THIS FACTOR 1, chloroplastic (498 aa).

The N-terminal 50 residues, 1–50 (MDAKLLLPFPFAPAAATRSPKSLFLGAPLPPPPRPPPFPLRLRPRPAAVV), are a transit peptide targeting the chloroplast. Residues 59–387 (KEAPFDTVIQ…LKEKMRALVA (329 aa)) form the PORR domain. 2 disordered regions span residues 397-427 (VGTG…EDEG) and 446-498 (DYEW…RERW). Acidic residues-rich tracts occupy residues 417–427 (SDEEYDDEDEG) and 456–466 (ENDDSPPDFGD).

It is found in the plastid. The protein resides in the chloroplast. Its function is as follows. RNA-binding protein involved in the chloroplastic group II intron splicing. Binds specific group II introns and promotes their splicing. Functions in the context of a heterodimer with the ribonuclease III domain-containing protein RNC1. In Zea mays (Maize), this protein is Protein WHAT'S THIS FACTOR 1, chloroplastic.